Here is a 170-residue protein sequence, read N- to C-terminus: ATP synthase subunit b (170 aa).

The chain crosses the membrane as a helical span at residues 30–50; sequence FFFVLAIFLVVLAVIGTFVVP.

Belongs to the ATPase B chain family. F-type ATPases have 2 components, F(1) - the catalytic core - and F(0) - the membrane proton channel. F(1) has five subunits: alpha(3), beta(3), gamma(1), delta(1), epsilon(1). F(0) has three main subunits: a(1), b(2) and c(10-14). The alpha and beta chains form an alternating ring which encloses part of the gamma chain. F(1) is attached to F(0) by a central stalk formed by the gamma and epsilon chains, while a peripheral stalk is formed by the delta and b chains.

It is found in the cell membrane. Its function is as follows. F(1)F(0) ATP synthase produces ATP from ADP in the presence of a proton or sodium gradient. F-type ATPases consist of two structural domains, F(1) containing the extramembraneous catalytic core and F(0) containing the membrane proton channel, linked together by a central stalk and a peripheral stalk. During catalysis, ATP synthesis in the catalytic domain of F(1) is coupled via a rotary mechanism of the central stalk subunits to proton translocation. In terms of biological role, component of the F(0) channel, it forms part of the peripheral stalk, linking F(1) to F(0). This chain is ATP synthase subunit b, found in Mycobacterium marinum (strain ATCC BAA-535 / M).